The chain runs to 330 residues: Phosphate acyltransferase (330 aa).

It belongs to the PlsX family. In terms of assembly, homodimer. Probably interacts with PlsY.

The protein resides in the cytoplasm. The catalysed reaction is a fatty acyl-[ACP] + phosphate = an acyl phosphate + holo-[ACP]. It participates in lipid metabolism; phospholipid metabolism. Its function is as follows. Catalyzes the reversible formation of acyl-phosphate (acyl-PO(4)) from acyl-[acyl-carrier-protein] (acyl-ACP). This enzyme utilizes acyl-ACP as fatty acyl donor, but not acyl-CoA. The protein is Phosphate acyltransferase of Bacillus cereus (strain AH820).